The primary structure comprises 461 residues: Methanol--corrinoid protein co-methyltransferase (461 aa).

Zn(2+)-binding residues include Glu-164, Cys-220, and Cys-269.

This sequence belongs to the MtaB family. As to quaternary structure, heterotetramer, composed of 2 MtaB and 2 MtaC subunits.

It catalyses the reaction Co(I)-[methanol-specific corrinoid protein] + methanol + H(+) = methyl-Co(III)-[methanol-specific corrinoid protein] + H2O. Its function is as follows. Methyltransferase involved in methanogenesis in the methanol pathway. Catalyzes the methylation of the MtaC-bound cob(I)amide. The polypeptide is Methanol--corrinoid protein co-methyltransferase (mtaB) (Methanosarcina barkeri (strain Fusaro / DSM 804)).